The following is a 618-amino-acid chain: Probable N-acetylgalactosaminyltransferase 6 (618 aa).

Topologically, residues 1–16 (MIASLIRSRRRSRRCV) are cytoplasmic. A helical; Signal-anchor for type II membrane protein membrane pass occupies residues 17–39 (VYSVFLFGFLALWGSFALALVFL). Residues 40–618 (SDMYIGEDQI…TEMSWLPEHP (579 aa)) are Lumenal-facing. Asn81 and Asn149 each carry an N-linked (GlcNAc...) asparagine glycan. 2 disulfide bridges follow: Cys147–Cys381 and Cys372–Cys452. The segment at 156–267 (LPTTSVIIVY…KGWLEPLLTR (112 aa)) is catalytic subdomain A. Residues Asp197 and Arg228 each coordinate substrate. Asp251 provides a ligand contact to Mn(2+). Substrate is bound at residue Ser252. A Mn(2+)-binding site is contributed by His253. Positions 327–389 (PIESPTMAGG…PCSHVGHVFR (63 aa)) are catalytic subdomain B. Trp358 serves as a coordination point for substrate. His386 contributes to the Mn(2+) binding site. Arg389 lines the substrate pocket. A Ricin B-type lectin domain is found at 474–609 (RFGRMTSSSN…SNDRQNWTIT (136 aa)). The N-linked (GlcNAc...) asparagine glycan is linked to Asn483. 3 disulfide bridges follow: Cys487–Cys505, Cys530–Cys550, and Cys575–Cys597. Residue Asn605 is glycosylated (N-linked (GlcNAc...) asparagine).

The protein belongs to the glycosyltransferase 2 family. GalNAc-T subfamily. Requires Mn(2+) as cofactor.

The protein localises to the golgi apparatus membrane. It participates in protein modification; protein glycosylation. In terms of biological role, probable glycopeptide transferase involved in O-linked oligosaccharide biosynthesis. Glycopeptide transferases catalyze the transfer of an N-acetyl-D-galactosamine residue to an already glycosylated peptide. In contrast to other members of the family, it does not act as a peptide transferase that transfers GalNAc onto serine or threonine residue on peptides that have been tested. Some peptide transferase activity is however not excluded, considering that its appropriate peptide substrate may remain unidentified. In Caenorhabditis elegans, this protein is Probable N-acetylgalactosaminyltransferase 6 (gly-6).